Here is a 47-residue protein sequence, read N- to C-terminus: PhoP/PhoQ regulator MgrB (47 aa).

The helical transmembrane segment at W6–V26 threads the bilayer.

This sequence belongs to the MgrB family. As to quaternary structure, may form homooligomers. Probably interacts with the periplasmic domain of PhoQ.

It localises to the cell inner membrane. PhoP-regulated transcription is redox-sensitive, being activated when the periplasm becomes more reducing. MgrB acts between DsbA/DsbB and PhoP/PhoQ in this pathway. Represses PhoP/PhoQ signaling, possibly by binding to the periplasmic domain of PhoQ, altering its activity and that of downstream effector PhoP. The sequence is that of PhoP/PhoQ regulator MgrB from Cronobacter sakazakii (strain ATCC BAA-894) (Enterobacter sakazakii).